Consider the following 470-residue polypeptide: MTPFMTEDFLLDTEFARRLYHDYAKDQPIFDYHCHLPPQQIAEDYRFKNLYDIWLKGDHYKWRAMRTNGVAERLCTGDASDREKFDAWAATVPHTIGNPLYHWTHLELRRPFGITGKLLSPSTADEIWNECNELLAQDNFSARGIMQQMNVKMVGTTDDPIDSLEHHAEIAKDGSFTIKVLPSWRPDKAFNIEQATFNDYMAKLGEVSDTDIRRFADLQTALTKRLDHFAAHGCKVSDHALDVVMFAEANEAELDSILARRLAGEPLSEHEVAQFKTAVLVFLGAEYARRGWVQQYHIGALRNNNLRQFKLLGPDVGFDSINDRPMAEELSKLLSKQNEENLLPKTILYCLNPRDNEVLGTMIGNFQGEGMPGKMQFGSGWWFNDQKDGMERQMTQLAQLGLLSRFVGMLTDSRSFLSYTRHEYFRRILCQMIGRWVEAGEAPADINLLGEMVKNICFNNARDYFAIELN.

Belongs to the metallo-dependent hydrolases superfamily. Uronate isomerase family.

It carries out the reaction D-glucuronate = D-fructuronate. It catalyses the reaction aldehydo-D-galacturonate = keto-D-tagaturonate. The protein operates within carbohydrate metabolism; pentose and glucuronate interconversion. The chain is Uronate isomerase from Escherichia coli O8 (strain IAI1).